Reading from the N-terminus, the 70-residue chain is uncharacterized protein (70 aa).

Residues 50-70 (FYLLVFFIILWVSREAFFYLI) form a helical membrane-spanning segment.

The protein belongs to the M.jannaschii MJ0023/MJ0349/MJ1072/MJ1074/MJ1107/MJECL16 family.

The protein resides in the membrane. This is an uncharacterized protein from Methanocaldococcus jannaschii (strain ATCC 43067 / DSM 2661 / JAL-1 / JCM 10045 / NBRC 100440) (Methanococcus jannaschii).